The chain runs to 134 residues: Fatty acid-binding protein, muscle (134 aa).

(9Z)-octadecenoate contacts are provided by residues Arg-109 and 129–131; that span reads RIY.

Belongs to the calycin superfamily. Fatty-acid binding protein (FABP) family. Monomer. Adult flight muscle.

It localises to the cytoplasm. In terms of biological role, binds fatty acids in a 1:1 molar ratio. This chain is Fatty acid-binding protein, muscle, found in Schistocerca gregaria (Desert locust).